A 320-amino-acid chain; its full sequence is o-succinylbenzoate synthase (320 aa).

K133 functions as the Proton donor in the catalytic mechanism. Mg(2+) is bound by residues D161, E190, and D213. Residue K235 is the Proton acceptor of the active site.

This sequence belongs to the mandelate racemase/muconate lactonizing enzyme family. MenC type 1 subfamily. It depends on a divalent metal cation as a cofactor.

The enzyme catalyses (1R,6R)-6-hydroxy-2-succinyl-cyclohexa-2,4-diene-1-carboxylate = 2-succinylbenzoate + H2O. It functions in the pathway quinol/quinone metabolism; 1,4-dihydroxy-2-naphthoate biosynthesis; 1,4-dihydroxy-2-naphthoate from chorismate: step 4/7. The protein operates within quinol/quinone metabolism; menaquinone biosynthesis. In terms of biological role, converts 2-succinyl-6-hydroxy-2,4-cyclohexadiene-1-carboxylate (SHCHC) to 2-succinylbenzoate (OSB). The chain is o-succinylbenzoate synthase from Salmonella newport (strain SL254).